We begin with the raw amino-acid sequence, 320 residues long: Baseplate tail-tube junction protein gp54 (320 aa).

As to quaternary structure, homohexamer. The tube second annulus is composed of a gp54 hexameric ring. Interacts with the tail tube protein gp19. Interacts with the first layer of sheath proteins gp18. Part of the baseplate macromolecular complex which consists of gp5, gp5.4, gp27 (central spike complex); gp6, gp25, gp53 (inner baseplate); gp7, gp8 (intermediate baseplate); gp9, gp10, gp11, gp12 (peripheral); gp48 and gp54 (proximal region of the tail tube).

It is found in the virion. Functionally, baseplate protein that forms, together with gp48, the baseplate-tail tube junction. The tail tube first 2 annuli are formed by gp48 and gp54, which are in continuation of the spike complex. Involved in the tail assembly. Morphogenesis of the baseplate is completed by association of gp48 and gp54, which bind the upper part of the baseplate dome to form the platform for polymerization of the tail tube. The protein is Baseplate tail-tube junction protein gp54 (54) of Escherichia coli (Bacteriophage T4).